The primary structure comprises 275 residues: Diaminopimelate epimerase (275 aa).

Substrate contacts are provided by Asn-13, Gln-46, and Asn-65. The Proton donor role is filled by Cys-74. Substrate is bound by residues 75–76 (GN), Asn-158, Asn-191, and 209–210 (ER). Residue Cys-218 is the Proton acceptor of the active site. A substrate-binding site is contributed by 219–220 (GT).

It belongs to the diaminopimelate epimerase family. Homodimer.

It localises to the cytoplasm. The catalysed reaction is (2S,6S)-2,6-diaminopimelate = meso-2,6-diaminopimelate. It participates in amino-acid biosynthesis; L-lysine biosynthesis via DAP pathway; DL-2,6-diaminopimelate from LL-2,6-diaminopimelate: step 1/1. Its function is as follows. Catalyzes the stereoinversion of LL-2,6-diaminopimelate (L,L-DAP) to meso-diaminopimelate (meso-DAP), a precursor of L-lysine and an essential component of the bacterial peptidoglycan. The polypeptide is Diaminopimelate epimerase (Nitrosomonas europaea (strain ATCC 19718 / CIP 103999 / KCTC 2705 / NBRC 14298)).